We begin with the raw amino-acid sequence, 380 residues long: MGGNTIGKMFSVTTWGESHGKAIGAVIDGCPAGLPLSEEDLLVELSLRRPGRRFTTPRREPDVPEILSGVFNGKTTGMPISIIIRNRDVISSYYEKIKETPRPGHADLAYIKKYGYEHWDYRGGGRASGRETAARVAAGAVAKKLLGCLGVVVSGYVVELGGVEFPSAEDAEESLRSRLSPFRVLCCEEKAEEVLKEALERRDSVGGVVEAVAWNAPAGLGEPVFDKLKADLAKAMMSIPASVGFEVGWGFKLARLRGSEARDKIVSSAGEATVEGDKAGGMLGGISVGAPIRIRVAFKPTSSIMIPEKTVNIHTLEETEVEVPGRHDPAIVLRAVSVVESMFAIVLVDHAIRAGLLNPVRVEWGPHCQRVWELYADRVP.

Positions 48 and 53 each coordinate NADP(+). Residues 126-128, Gly284, 299-303, and Arg326 each bind FMN; these read RAS and KPTSS.

The protein belongs to the chorismate synthase family. FMNH2 serves as cofactor.

It carries out the reaction 5-O-(1-carboxyvinyl)-3-phosphoshikimate = chorismate + phosphate. The protein operates within metabolic intermediate biosynthesis; chorismate biosynthesis; chorismate from D-erythrose 4-phosphate and phosphoenolpyruvate: step 7/7. In terms of biological role, catalyzes the anti-1,4-elimination of the C-3 phosphate and the C-6 proR hydrogen from 5-enolpyruvylshikimate-3-phosphate (EPSP) to yield chorismate, which is the branch point compound that serves as the starting substrate for the three terminal pathways of aromatic amino acid biosynthesis. This reaction introduces a second double bond into the aromatic ring system. This is Chorismate synthase from Ignicoccus hospitalis (strain KIN4/I / DSM 18386 / JCM 14125).